A 501-amino-acid polypeptide reads, in one-letter code: Cytochrome P450 71B23 (501 aa).

A helical membrane pass occupies residues 1–21 (MSIFLCFLLLLLLLLVTIIFT). Cys-443 contributes to the heme binding site.

The protein belongs to the cytochrome P450 family. It depends on heme as a cofactor.

It is found in the membrane. The chain is Cytochrome P450 71B23 (CYP71B23) from Arabidopsis thaliana (Mouse-ear cress).